The sequence spans 1002 residues: Calmin (1002 aa).

The actin-binding stretch occupies residues 1-288 (MAAHEWDWFQ…IMTYVAQFLE (288 aa)). Positions 32–139 (NVQKRTFTRW…LIWNIILFFQ (108 aa)) constitute a Calponin-homology (CH) 1 domain. Positions 149-168 (RNSPSSSLSPGSGGTDSDSS) are enriched in low complexity. The segment at 149–180 (RNSPSSSLSPGSGGTDSDSSFPPTPTAERSVA) is disordered. The Calponin-homology (CH) 2 domain occupies 187-291 (RKAIKALLAW…YVAQFLERFP (105 aa)). Ser301 and Ser402 each carry phosphoserine. 4 disordered regions span residues 389-418 (QGGP…GRSN), 500-532 (NNNS…GENT), 581-716 (NKVP…SPPL), and 749-911 (DLKN…DSSI). Low complexity predominate over residues 396-409 (SDISEPSPESSILS). The segment covering 500–509 (NNNSQSSSCN) has biased composition (polar residues). A compositionally biased stretch (basic and acidic residues) spans 585–606 (SPHETKPDEDAEAFENHAEKLG). The span at 607–617 (KRSIKSAHKKK) shows a compositional bias: basic residues. Composition is skewed to basic and acidic residues over residues 618-635 (DSPE…HQDS) and 650-659 (PVDKKPEVHE). Residue Ser619 is modified to Phosphoserine. A compositionally biased stretch (low complexity) spans 681 to 697 (GVGEELSSSPPSSCVSL). Thr699 is subject to Phosphothreonine. A phosphoserine mark is found at Ser713 and Ser769. The segment covering 776-794 (GSQSSSSSSVPGESLPSAS) has biased composition (low complexity). The span at 818-834 (PHEDHQQRETKENDPMD) shows a compositional bias: basic and acidic residues. A compositionally biased stretch (polar residues) spans 835–846 (SHQSQESPNLEN). Phosphoserine is present on residues Ser838 and Ser841. The segment covering 854 to 863 (NVTKESISSK) has biased composition (basic and acidic residues). Residues 898–910 (YSIPSRTSHSDSS) are compositionally biased toward polar residues. Ser907 bears the Phosphoserine mark. A helical; Anchor for type IV membrane protein membrane pass occupies residues 977–997 (MMYFILFLWLLVYCLLLFPQL).

In terms of tissue distribution, widely expressed at intermediate level.

It localises to the membrane. The polypeptide is Calmin (CLMN) (Homo sapiens (Human)).